The chain runs to 245 residues: Precorrin-2 C(20)-methyltransferase (245 aa).

This sequence belongs to the precorrin methyltransferase family. As to quaternary structure, homodimer.

The enzyme catalyses precorrin-2 + S-adenosyl-L-methionine = precorrin-3A + S-adenosyl-L-homocysteine + H(+). It participates in cofactor biosynthesis; adenosylcobalamin biosynthesis; cob(II)yrinate a,c-diamide from precorrin-2 (aerobic route): step 1/10. Functionally, methylates precorrin-2 at the C-20 position to produce precorrin-3A. This Sinorhizobium sp protein is Precorrin-2 C(20)-methyltransferase (cobI).